We begin with the raw amino-acid sequence, 865 residues long: Leucine--tRNA ligase (865 aa).

A 'HIGH' region motif is present at residues 48–58; that stretch reads PYPSGQLHVGH. Residues 626–630 carry the 'KMSKS' region motif; sequence KMSKS. Lysine 629 contacts ATP.

It belongs to the class-I aminoacyl-tRNA synthetase family.

The protein resides in the cytoplasm. The enzyme catalyses tRNA(Leu) + L-leucine + ATP = L-leucyl-tRNA(Leu) + AMP + diphosphate. The chain is Leucine--tRNA ligase from Gluconobacter oxydans (strain 621H) (Gluconobacter suboxydans).